Consider the following 492-residue polypeptide: Catalase isozyme 1 (492 aa).

Residues His-65 and Asn-138 contribute to the active site. Tyr-348 contributes to the heme binding site.

This sequence belongs to the catalase family. In terms of assembly, homotetramer. Requires heme as cofactor.

The protein localises to the peroxisome. It localises to the glyoxysome. The catalysed reaction is 2 H2O2 = O2 + 2 H2O. Functionally, occurs in almost all aerobically respiring organisms and serves to protect cells from the toxic effects of hydrogen peroxide. The protein is Catalase isozyme 1 (CAT1) of Solanum tuberosum (Potato).